Here is a 256-residue protein sequence, read N- to C-terminus: Probable elongation factor 1-delta (256 aa).

Ser-37, Ser-53, and Ser-89 each carry phosphoserine. Positions 110 to 146 (NGVSKEPEVEAKKPEANDDDDDVDLFGSDSEEEDGEA) are disordered. A compositionally biased stretch (basic and acidic residues) spans 114-125 (KEPEVEAKKPEA). Acidic residues predominate over residues 126 to 144 (NDDDDDVDLFGSDSEEEDG). Residues Ser-137 and Ser-139 each carry the phosphoserine modification.

The protein belongs to the EF-1-beta/EF-1-delta family. As to quaternary structure, EF-1 is composed of 4 subunits: alpha, beta, delta, and gamma.

EF-1-beta and EF-1-delta stimulate the exchange of GDP bound to EF-1-alpha to GTP. This Drosophila melanogaster (Fruit fly) protein is Probable elongation factor 1-delta (eEF1delta).